Reading from the N-terminus, the 217-residue chain is Small ribosomal subunit protein uS3 (217 aa).

The KH type-2 domain maps to 38–106 (IRKFIDNELK…KVHINVIEIK (69 aa)).

This sequence belongs to the universal ribosomal protein uS3 family. Part of the 30S ribosomal subunit. Forms a tight complex with proteins S10 and S14.

Its function is as follows. Binds the lower part of the 30S subunit head. Binds mRNA in the 70S ribosome, positioning it for translation. The sequence is that of Small ribosomal subunit protein uS3 from Staphylococcus aureus (strain MSSA476).